The sequence spans 93 residues: U12-lycotoxin-Ls1a (93 aa).

Positions 1–18 (MKFAVILLFSLVVLTVAS) are cleaved as a signal peptide. A propeptide spanning residues 19–38 (ESVEEVRREIDIEDLPEQQR) is cleaved from the precursor.

Belongs to the neurotoxin 31 family. Post-translationally, contains 5 disulfide bonds. As to expression, expressed by the venom gland.

It is found in the secreted. The protein is U12-lycotoxin-Ls1a of Lycosa singoriensis (Wolf spider).